The following is a 75-amino-acid chain: uncharacterized protein (75 aa).

A helical transmembrane segment spans residues 44-64; sequence IINMIVIWAALIALFVKLYIL.

It is found in the host membrane. This is an uncharacterized protein from Ostreid herpesvirus 1 (isolate France) (OsHV-1).